Here is a 23-residue protein sequence, read N- to C-terminus: Phallacidin proprotein 1 (23 aa).

Residue Pro-1 is a propeptide. The segment at residues 2 to 8 is a cross-link (cyclopeptide (Ala-Pro)); the sequence is AWLVDCP. Residues 3-7 constitute a cross-link (2'-cysteinyl-6'-hydroxytryptophan sulfoxide (Trp-Cys)); that stretch reads WLVDC. The propeptide occupies 9–23; that stretch reads CVGDDINRLLTRGEK.

This sequence belongs to the MSDIN fungal toxin family. Processed by the macrocyclase-peptidase enzyme POPB to yield a toxic cyclic heptapeptide. POPB first removes 10 residues from the N-terminus. Conformational trapping of the remaining peptide forces the enzyme to release this intermediate rather than proceed to macrocyclization. The enzyme rebinds the remaining peptide in a different conformation and catalyzes macrocyclization of the N-terminal 7 residues.

In terms of biological role, major toxin that belongs to the bicyclic heptapeptides called phallotoxins. Although structurally related to amatoxins, phallotoxins have a different mode of action, which is the stabilization of F-actin. Phallotoxins are poisonous when administered parenterally, but not orally because of poor absorption. This Amanita phalloides (Death cap) protein is Phallacidin proprotein 1.